A 322-amino-acid polypeptide reads, in one-letter code: 4-hydroxy-3-methylbut-2-enyl diphosphate reductase (322 aa).

C15 is a [4Fe-4S] cluster binding site. (2E)-4-hydroxy-3-methylbut-2-enyl diphosphate-binding residues include H44 and H77. 2 residues coordinate dimethylallyl diphosphate: H44 and H77. 2 residues coordinate isopentenyl diphosphate: H44 and H77. C99 is a binding site for [4Fe-4S] cluster. H127 provides a ligand contact to (2E)-4-hydroxy-3-methylbut-2-enyl diphosphate. H127 lines the dimethylallyl diphosphate pocket. H127 provides a ligand contact to isopentenyl diphosphate. Catalysis depends on E129, which acts as the Proton donor. (2E)-4-hydroxy-3-methylbut-2-enyl diphosphate is bound at residue T168. C198 provides a ligand contact to [4Fe-4S] cluster. (2E)-4-hydroxy-3-methylbut-2-enyl diphosphate contacts are provided by S226, S227, N228, and S270. Dimethylallyl diphosphate-binding residues include S226, S227, N228, and S270. S226, S227, N228, and S270 together coordinate isopentenyl diphosphate.

This sequence belongs to the IspH family. The cofactor is [4Fe-4S] cluster.

It carries out the reaction isopentenyl diphosphate + 2 oxidized [2Fe-2S]-[ferredoxin] + H2O = (2E)-4-hydroxy-3-methylbut-2-enyl diphosphate + 2 reduced [2Fe-2S]-[ferredoxin] + 2 H(+). The catalysed reaction is dimethylallyl diphosphate + 2 oxidized [2Fe-2S]-[ferredoxin] + H2O = (2E)-4-hydroxy-3-methylbut-2-enyl diphosphate + 2 reduced [2Fe-2S]-[ferredoxin] + 2 H(+). The protein operates within isoprenoid biosynthesis; dimethylallyl diphosphate biosynthesis; dimethylallyl diphosphate from (2E)-4-hydroxy-3-methylbutenyl diphosphate: step 1/1. It functions in the pathway isoprenoid biosynthesis; isopentenyl diphosphate biosynthesis via DXP pathway; isopentenyl diphosphate from 1-deoxy-D-xylulose 5-phosphate: step 6/6. Functionally, catalyzes the conversion of 1-hydroxy-2-methyl-2-(E)-butenyl 4-diphosphate (HMBPP) into a mixture of isopentenyl diphosphate (IPP) and dimethylallyl diphosphate (DMAPP). Acts in the terminal step of the DOXP/MEP pathway for isoprenoid precursor biosynthesis. This Neisseria meningitidis serogroup C (strain 053442) protein is 4-hydroxy-3-methylbut-2-enyl diphosphate reductase.